Consider the following 212-residue polypeptide: Peptide methionine sulfoxide reductase MsrA (212 aa).

C52 is an active-site residue.

Belongs to the MsrA Met sulfoxide reductase family.

It carries out the reaction L-methionyl-[protein] + [thioredoxin]-disulfide + H2O = L-methionyl-(S)-S-oxide-[protein] + [thioredoxin]-dithiol. It catalyses the reaction [thioredoxin]-disulfide + L-methionine + H2O = L-methionine (S)-S-oxide + [thioredoxin]-dithiol. Its function is as follows. Has an important function as a repair enzyme for proteins that have been inactivated by oxidation. Catalyzes the reversible oxidation-reduction of methionine sulfoxide in proteins to methionine. This is Peptide methionine sulfoxide reductase MsrA from Escherichia coli O17:K52:H18 (strain UMN026 / ExPEC).